The primary structure comprises 260 residues: Sodium channel modifier 1 (260 aa).

The Bipartite nuclear localization signal signature appears at Lys4–Arg20. A Matrin-type zinc finger spans residues Tyr42–Arg74. Positions Arg143 to Ser260 are disordered. Over residues Pro166–Thr187 the composition is skewed to polar residues. The segment covering Lys202–Glu221 has biased composition (basic and acidic residues). Residues Val245–Pro254 show a composition bias toward acidic residues.

Component of the minor spliceosome, which splices U12-type introns.

It localises to the nucleus. Its subcellular location is the nucleoplasm. It is found in the nucleus speckle. In terms of biological role, as a component of the minor spliceosome, involved in the splicing of U12-type introns in pre-mRNAs. The sequence is that of Sodium channel modifier 1 (scnm1) from Xenopus laevis (African clawed frog).